The following is a 248-amino-acid chain: Type III pantothenate kinase (248 aa).

6 to 13 (DIGNTETK) contributes to the ATP binding site. Residue 103-106 (GSDR) coordinates substrate. Catalysis depends on Asp-105, which acts as the Proton acceptor. Residue Asp-124 coordinates K(+). Thr-127 lines the ATP pocket. Thr-178 provides a ligand contact to substrate.

It belongs to the type III pantothenate kinase family. In terms of assembly, homodimer. Requires NH4(+) as cofactor. K(+) is required as a cofactor.

Its subcellular location is the cytoplasm. It carries out the reaction (R)-pantothenate + ATP = (R)-4'-phosphopantothenate + ADP + H(+). It functions in the pathway cofactor biosynthesis; coenzyme A biosynthesis; CoA from (R)-pantothenate: step 1/5. Functionally, catalyzes the phosphorylation of pantothenate (Pan), the first step in CoA biosynthesis. This is Type III pantothenate kinase from Pelagibacter ubique (strain HTCC1062).